The sequence spans 413 residues: Arginine biosynthesis bifunctional protein ArgJ (413 aa).

Substrate is bound by residues Thr-158, Lys-184, Thr-195, Glu-285, Asn-408, and Ser-413. The active-site Nucleophile is the Thr-195.

This sequence belongs to the ArgJ family. As to quaternary structure, heterotetramer of two alpha and two beta chains.

It localises to the cytoplasm. The catalysed reaction is N(2)-acetyl-L-ornithine + L-glutamate = N-acetyl-L-glutamate + L-ornithine. It catalyses the reaction L-glutamate + acetyl-CoA = N-acetyl-L-glutamate + CoA + H(+). It participates in amino-acid biosynthesis; L-arginine biosynthesis; L-ornithine and N-acetyl-L-glutamate from L-glutamate and N(2)-acetyl-L-ornithine (cyclic): step 1/1. It functions in the pathway amino-acid biosynthesis; L-arginine biosynthesis; N(2)-acetyl-L-ornithine from L-glutamate: step 1/4. In terms of biological role, catalyzes two activities which are involved in the cyclic version of arginine biosynthesis: the synthesis of N-acetylglutamate from glutamate and acetyl-CoA as the acetyl donor, and of ornithine by transacetylation between N(2)-acetylornithine and glutamate. This chain is Arginine biosynthesis bifunctional protein ArgJ, found in Rhizobium meliloti (strain 1021) (Ensifer meliloti).